The primary structure comprises 115 residues: Large ribosomal subunit protein bL19 (115 aa).

Belongs to the bacterial ribosomal protein bL19 family.

This protein is located at the 30S-50S ribosomal subunit interface and may play a role in the structure and function of the aminoacyl-tRNA binding site. The polypeptide is Large ribosomal subunit protein bL19 (Buchnera aphidicola subsp. Acyrthosiphon pisum (strain Tuc7)).